Reading from the N-terminus, the 283-residue chain is Polyprenyl-phosphate transporter (283 aa).

Transmembrane regions (helical) follow at residues 27 to 47, 51 to 71, 85 to 105, 112 to 132, 148 to 168, 169 to 189, 197 to 217, 230 to 250, and 255 to 275; these read GTIA…SGIF, FWPS…AMGS, IPTM…LLKI, FTTK…VITL, TSLI…MLLP, GISG…MLAI, FAGL…FIIS, LMTF…VFPG, and IVMW…SLTL.

Belongs to the PopT family.

It localises to the cell membrane. Active in alkaline conditions. Functionally, flippase that catalyzes the transport of undecaprenyl phosphate (UndP) across the cytoplasmic membrane, from the external side to the cytoplasmic side. Is involved in UndP recycling during peptidoglycan synthesis. Necessary for peptidoglycan maintenance. The protein is Polyprenyl-phosphate transporter of Staphylococcus aureus (strain NCTC 8325 / PS 47).